The sequence spans 130 residues: MAVVNFYGTGRRKEAVARVFVVPGEGNITINGKSLEEYFPRKTLQIIVKQPLELTNTVGKFDVKAKVHGGGISGQAGAVRLGIARALVQADPSLRPVLKKAGFLTRDPRMVERKKYGLRKSRRRPQWTKR.

The protein belongs to the universal ribosomal protein uS9 family.

This is Small ribosomal subunit protein uS9 from Carboxydothermus hydrogenoformans (strain ATCC BAA-161 / DSM 6008 / Z-2901).